The following is a 399-amino-acid chain: Ribose-phosphate pyrophosphokinase 2, chloroplastic (399 aa).

A chloroplast-targeting transit peptide spans 1 to 32 (MAAKAAALSSSPFVSSRRLSSPAASLRARTPR). Mg(2+) is bound by residues Asp-214, His-216, Asp-225, and Asp-229. The segment at 299 to 314 (GKVAIMVDDMIDTAGT) is binding of phosphoribosylpyrophosphate.

Belongs to the ribose-phosphate pyrophosphokinase family. It depends on Mg(2+) as a cofactor.

The protein localises to the plastid. It localises to the chloroplast. It carries out the reaction D-ribose 5-phosphate + ATP = 5-phospho-alpha-D-ribose 1-diphosphate + AMP + H(+). The protein is Ribose-phosphate pyrophosphokinase 2, chloroplastic of Oryza sativa subsp. japonica (Rice).